The following is a 31-amino-acid chain: Photosystem II reaction center protein T (31 aa).

The helical transmembrane segment at 3–23 threads the bilayer; sequence ALVYTFLLIGTLGIIFFAIFF.

This sequence belongs to the PsbT family. PSII is composed of 1 copy each of membrane proteins PsbA, PsbB, PsbC, PsbD, PsbE, PsbF, PsbH, PsbI, PsbJ, PsbK, PsbL, PsbM, PsbT, PsbY, PsbZ, Psb30/Ycf12, at least 3 peripheral proteins of the oxygen-evolving complex and a large number of cofactors. It forms dimeric complexes.

The protein localises to the plastid. It is found in the chloroplast thylakoid membrane. Found at the monomer-monomer interface of the photosystem II (PS II) dimer, plays a role in assembly and dimerization of PSII. PSII is a light-driven water plastoquinone oxidoreductase, using light energy to abstract electrons from H(2)O, generating a proton gradient subsequently used for ATP formation. The sequence is that of Photosystem II reaction center protein T from Stigeoclonium helveticum (Green alga).